We begin with the raw amino-acid sequence, 455 residues long: Kynurenine 3-monooxygenase (455 aa).

The next 2 helical transmembrane spans lie at 393-416 and 429-453; these read WLFR…SMPY and LLWR…YWQR.

It belongs to the aromatic-ring hydroxylase family. KMO subfamily. Requires FAD as cofactor.

The protein localises to the mitochondrion. It is found in the membrane. It carries out the reaction L-kynurenine + NADPH + O2 + H(+) = 3-hydroxy-L-kynurenine + NADP(+) + H2O. Its pathway is cofactor biosynthesis; NAD(+) biosynthesis; quinolinate from L-kynurenine: step 1/3. Its function is as follows. Catalyzes the hydroxylation of L-kynurenine (L-Kyn) to form 3-hydroxy-L-kynurenine (L-3OHKyn). Required for synthesis of quinolinic acid. The polypeptide is Kynurenine 3-monooxygenase (Drosophila willistoni (Fruit fly)).